Consider the following 571-residue polypeptide: Putative phospholipase B-like 1 (571 aa).

Residues 1–18 (MNWIFIFLAAAVAIGCEA) form the signal peptide. Residues N62, N149, N442, and N473 are each glycosylated (N-linked (GlcNAc...) asparagine).

It belongs to the phospholipase B-like family.

It localises to the lysosome. Putative phospholipase. The chain is Putative phospholipase B-like 1 from Caenorhabditis elegans.